Consider the following 260-residue polypeptide: Ribosomal RNA small subunit methyltransferase G (260 aa).

Residues glycine 94, phenylalanine 99, 117–119 (DST), 145–146 (AE), and arginine 164 each bind S-adenosyl-L-methionine. The segment at 236–260 (APTPPPYPRSPGTPKRQPLGQSNRP) is disordered. Residues 237 to 246 (PTPPPYPRSP) show a composition bias toward pro residues.

It belongs to the methyltransferase superfamily. RNA methyltransferase RsmG family.

It is found in the cytoplasm. Specifically methylates the N7 position of a guanine in 16S rRNA. The polypeptide is Ribosomal RNA small subunit methyltransferase G (Synechococcus sp. (strain JA-2-3B'a(2-13)) (Cyanobacteria bacterium Yellowstone B-Prime)).